The following is a 367-amino-acid chain: tRNA (cytosine(34)-C(5))-methyltransferase, mitochondrial (367 aa).

S-adenosyl-L-methionine is bound by residues 170 to 176, Glu-193, Asp-224, and Asp-242; that span reads CAAPGGK. Residue Cys-296 is the Nucleophile of the active site.

It belongs to the class I-like SAM-binding methyltransferase superfamily. RsmB/NOP family.

It is found in the mitochondrion matrix. The catalysed reaction is cytidine(34) in mitochondrial tRNA + S-adenosyl-L-methionine = 5-methylcytidine(34) in mitochondrial tRNA + S-adenosyl-L-homocysteine + H(+). Its function is as follows. Mitochondrial tRNA methyltransferase that mediates methylation of cytosine to 5-methylcytosine (m5C) at position 34 of mt-tRNA(Met). mt-tRNA(Met) methylation at cytosine(34) takes place at the wobble position of the anticodon and initiates the formation of 5-formylcytosine (f(5)c) at this position. mt-tRNA(Met) containing the f(5)c modification at the wobble position enables recognition of the AUA codon in addition to the AUG codon, expanding codon recognition in mitochondrial translation. In Danio rerio (Zebrafish), this protein is tRNA (cytosine(34)-C(5))-methyltransferase, mitochondrial.